The chain runs to 334 residues: HTH-type transcriptional regulator RegA (334 aa).

The HTH lacI-type domain occupies 1-57 (MAASIKDVAREARVSIATVSRVLNNVDVVNEETKKKVMEAIKKLDYRPNIVARSLKT). The segment at residues 5–24 (IKDVAREARVSIATVSRVLN) is a DNA-binding region (H-T-H motif).

Functionally, involved in the regulation of amylase production. In Clostridium acetobutylicum (strain ATCC 824 / DSM 792 / JCM 1419 / IAM 19013 / LMG 5710 / NBRC 13948 / NRRL B-527 / VKM B-1787 / 2291 / W), this protein is HTH-type transcriptional regulator RegA (regA).